The following is a 483-amino-acid chain: Regulatory protein ViaA (483 aa).

The protein belongs to the ViaA family. Homodimer. Interacts with RavA.

Its subcellular location is the cytoplasm. Functionally, component of the RavA-ViaA chaperone complex, which may act on the membrane to optimize the function of some of the respiratory chains. ViaA stimulates the ATPase activity of RavA. The polypeptide is Regulatory protein ViaA (Escherichia coli O17:K52:H18 (strain UMN026 / ExPEC)).